We begin with the raw amino-acid sequence, 347 residues long: Uroporphyrinogen decarboxylase (347 aa).

Substrate contacts are provided by residues 24–28, Asp74, Tyr145, Ser200, and His315; that span reads RQAGR.

Belongs to the uroporphyrinogen decarboxylase family. In terms of assembly, homodimer.

The protein resides in the cytoplasm. The enzyme catalyses uroporphyrinogen III + 4 H(+) = coproporphyrinogen III + 4 CO2. The protein operates within porphyrin-containing compound metabolism; protoporphyrin-IX biosynthesis; coproporphyrinogen-III from 5-aminolevulinate: step 4/4. Functionally, catalyzes the decarboxylation of four acetate groups of uroporphyrinogen-III to yield coproporphyrinogen-III. The polypeptide is Uroporphyrinogen decarboxylase (Hydrogenobaculum sp. (strain Y04AAS1)).